Reading from the N-terminus, the 434-residue chain is Trigger factor (434 aa).

The PPIase FKBP-type domain maps to Glu161 to Pro246.

This sequence belongs to the FKBP-type PPIase family. Tig subfamily.

The protein resides in the cytoplasm. It catalyses the reaction [protein]-peptidylproline (omega=180) = [protein]-peptidylproline (omega=0). Functionally, involved in protein export. Acts as a chaperone by maintaining the newly synthesized protein in an open conformation. Functions as a peptidyl-prolyl cis-trans isomerase. In Sodalis glossinidius (strain morsitans), this protein is Trigger factor.